The primary structure comprises 283 residues: Non-selective voltage-gated ion channel VDAC3 (283 aa).

Residue cysteine 2 is modified to N-acetylcysteine. At threonine 4 the chain carries Phosphothreonine. N6-acetyllysine occurs at positions 12, 15, and 20. 2 consecutive transmembrane segments (beta stranded) span residues 26-35 (MVKIDLRTKS) and 39-47 (VEFSTSGHA). Residue lysine 53 forms a Glycyl lysine isopeptide (Lys-Gly) (interchain with G-Cter in ubiquitin) linkage. 3 beta stranded membrane-spanning segments follow: residues 54-64 (ASGNLETKYKV), 69-76 (LTFTQKWN), and 80-89 (TLGTEISLEN). Lysine 90 carries the post-translational modification N6-acetyllysine. A beta stranded transmembrane segment spans residues 95-104 (LKLTLDTIFV). Residues lysine 109 and lysine 110 each participate in a glycyl lysine isopeptide (Lys-Gly) (interchain with G-Cter in ubiquitin) cross-link. 10 beta stranded membrane passes run 111-120 (SGKLKASYKR), 123-130 (FSLGSNVD), 137-145 (TIYGWAVLA), 150-158 (LAGYQMSFD), 163-175 (KLSQNNFALGYKA), 178-185 (FQLHTHVN), 189-198 (EFGGSIYQKV), 202-211 (IETSINLAWT), 218-227 (RFGIAAKYKL), and 231-238 (TSLSAKVN). Serine 241 bears the Phosphoserine mark. NAD(+)-binding positions include 242 to 244 (LIG) and 260 to 264 (SALID). 2 beta stranded membrane-spanning segments follow: residues 242-251 (LIGLGYTQTL) and 254-263 (GVKLTLSALI). An N6-acetyllysine; alternate modification is found at lysine 266. Lysine 266 is covalently cross-linked (Glycyl lysine isopeptide (Lys-Gly) (interchain with G-Cter in ubiquitin); alternate). Residues 273 to 282 (HKVGLGFELE) traverse the membrane as a beta stranded segment.

The protein belongs to the eukaryotic mitochondrial porin family. Interacts with ARMC12 in a TBC1D21-dependent manner. Interacts with MISFA. Post-translationally, ubiquitinated by PRKN during mitophagy, leading to its degradation and enhancement of mitophagy. Deubiquitinated by USP30.

The protein localises to the mitochondrion outer membrane. The protein resides in the membrane. The catalysed reaction is chloride(in) = chloride(out). The enzyme catalyses K(+)(in) = K(+)(out). Functionally, non-selective voltage-gated ion channel that mediates the transport of anions and cations through the mitochondrion outer membrane and plasma membrane. Forms a high-conducting channel with a stable open state and a voltage-induced closure with a mild preference for anions over cations. Involved in male fertility and sperm mitochondrial sheath formation. The protein is Non-selective voltage-gated ion channel VDAC3 of Oryctolagus cuniculus (Rabbit).